Here is a 186-residue protein sequence, read N- to C-terminus: ATP synthase subunit delta (186 aa).

It belongs to the ATPase delta chain family. In terms of assembly, F-type ATPases have 2 components, F(1) - the catalytic core - and F(0) - the membrane proton channel. F(1) has five subunits: alpha(3), beta(3), gamma(1), delta(1), epsilon(1). CF(0) has four main subunits: a(1), b(1), b'(1) and c(10-14). The alpha and beta chains form an alternating ring which encloses part of the gamma chain. F(1) is attached to F(0) by a central stalk formed by the gamma and epsilon chains, while a peripheral stalk is formed by the delta, b and b' chains.

Its subcellular location is the cell inner membrane. In terms of biological role, f(1)F(0) ATP synthase produces ATP from ADP in the presence of a proton or sodium gradient. F-type ATPases consist of two structural domains, F(1) containing the extramembraneous catalytic core and F(0) containing the membrane proton channel, linked together by a central stalk and a peripheral stalk. During catalysis, ATP synthesis in the catalytic domain of F(1) is coupled via a rotary mechanism of the central stalk subunits to proton translocation. Functionally, this protein is part of the stalk that links CF(0) to CF(1). It either transmits conformational changes from CF(0) to CF(1) or is implicated in proton conduction. This is ATP synthase subunit delta from Rhodopseudomonas palustris (strain BisB18).